The following is a 90-amino-acid chain: Small ribosomal subunit protein uS17 (90 aa).

This sequence belongs to the universal ribosomal protein uS17 family. In terms of assembly, part of the 30S ribosomal subunit.

In terms of biological role, one of the primary rRNA binding proteins, it binds specifically to the 5'-end of 16S ribosomal RNA. In Burkholderia thailandensis (strain ATCC 700388 / DSM 13276 / CCUG 48851 / CIP 106301 / E264), this protein is Small ribosomal subunit protein uS17.